Here is a 229-residue protein sequence, read N- to C-terminus: Flagellar L-ring protein (229 aa).

A signal peptide spans 1–23 (MLSRLGARVLYCLAGLALLASGG). Cys-24 carries N-palmitoyl cysteine lipidation. Residue Cys-24 is the site of S-diacylglycerol cysteine attachment.

It belongs to the FlgH family. As to quaternary structure, the basal body constitutes a major portion of the flagellar organelle and consists of four rings (L,P,S, and M) mounted on a central rod.

The protein localises to the cell outer membrane. It is found in the bacterial flagellum basal body. In terms of biological role, assembles around the rod to form the L-ring and probably protects the motor/basal body from shearing forces during rotation. The polypeptide is Flagellar L-ring protein (Cupriavidus pinatubonensis (strain JMP 134 / LMG 1197) (Cupriavidus necator (strain JMP 134))).